Here is a 234-residue protein sequence, read N- to C-terminus: Opacity protein V28 (234 aa).

Residue A1 is a signal peptide.

This sequence belongs to the opacity porin family.

The protein resides in the cell outer membrane. In terms of biological role, implicated in a number of adherence functions. OPA proteins are implicated in pathogenesis and are subject to phase variation. The protein is Opacity protein V28 of Neisseria gonorrhoeae.